Consider the following 199-residue polypeptide: MSAETAPINLTHHFLIAMPGLEDEAFSRSVIYLCEHSERGALGLIINKPSQLTLEGLLEKVDLALGREDLRGNRVFNGGPVQTDRGFVLHDPMVIEGAPDDESAYASTMTIPGGLEMTTSKDVLEALSDGAGPKRLLVTLGYASWGEGQLESELAENAWLTVGADANVIFDTPVDDRYDRALGLLGLQRWMISPEAGRA.

It belongs to the UPF0301 (AlgH) family.

The polypeptide is UPF0301 protein Daci_1578 (Delftia acidovorans (strain DSM 14801 / SPH-1)).